Reading from the N-terminus, the 301-residue chain is MCRMSFKKETPLANAAFWAARRGNLALLKLLLNSGRVDVDCRDSHGTTLLMVAAYAGHIDCVRELVLQGADINLQRESGTTALFFAAQQGHNDVVRFLFGFGASTEFRTKDGGTALLAASQYGHMQVVETLLKHGANIHDQLYDGATALFLAAQGGYLDVIRLLLASGAKVNQPRQDGTAPLWIASQMGHSEVVRVMLLRGADRDAARNDGTTALLKAANKGYNDVIKELLKFSPTLGILKNGTSALHAAVLSGNIKTVALLLEAGADPSLRNKANELPAELTKNERILRLLRSKEGPRKS.

ANK repeat units lie at residues Pro-11–Cys-41, His-45–Leu-74, Ser-78–Phe-107, Asp-111–Asp-140, Asp-144–Gln-173, Asp-177–Ala-206, Asp-210–Ile-239, and Asn-242–Leu-271.

This chain is Ankyrin repeat domain-containing protein 29 (ANKRD29), found in Homo sapiens (Human).